Here is a 363-residue protein sequence, read N- to C-terminus: Autophagy-related protein 3 (363 aa).

2 stretches are compositionally biased toward basic and acidic residues: residues 84–106 (DFAGDAGHDETVVRDGEDFRGDG) and 129–138 (ARVRDVRTVD). The tract at residues 84-171 (DFAGDAGHDE…DDEAIIRDPK (88 aa)) is flexible region. Positions 84-174 (DFAGDAGHDE…AIIRDPKADN (91 aa)) are disordered. Over residues 139–164 (ESGEMGEREDDEDDIPDMEDDDDDDE) the composition is skewed to acidic residues. The Glycyl thioester intermediate role is filled by cysteine 247. Residues 251–339 (SVMKTLLDRA…EEEVAIRVDQ (89 aa)) are handle region.

The protein belongs to the ATG3 family. Monomer. Interacts with atg8 through an intermediate thioester bond through the C-terminal Gly of atg8. Interacts with the C-terminal region of the E1-like atg7 enzyme. Also interacts with the atg12-atg5 conjugate.

The protein resides in the cytoplasm. Functionally, E2 conjugating enzyme required for the cytoplasm to vacuole transport (Cvt) and autophagy. Required for selective autophagic degradation of the nucleus (nucleophagy) as well as for mitophagy which contributes to regulate mitochondrial quantity and quality by eliminating the mitochondria to a basal level to fulfill cellular energy requirements and preventing excess ROS production. Responsible for the E2-like covalent binding of phosphatidylethanolamine to the C-terminal Gly of atg8. The atg12-atg5 conjugate plays a role of an E3 and promotes the transfer of atg8 from atg3 to phosphatidylethanolamine (PE). This step is required for the membrane association of atg8. The formation of the atg8-phosphatidylethanolamine conjugate is essential for autophagy and for the cytoplasm to vacuole transport (Cvt). The atg8-PE conjugate mediates tethering between adjacent membranes and stimulates membrane hemifusion, leading to expansion of the autophagosomal membrane during autophagy. Required for normal mycelial growth and conidiogenesis, and regulates sclerotial formation. Plays an essential role in pathogenesis. The sequence is that of Autophagy-related protein 3 from Botryotinia fuckeliana (strain BcDW1) (Noble rot fungus).